The following is a 275-amino-acid chain: NH(3)-dependent NAD(+) synthetase (275 aa).

Position 46 to 53 (46 to 53) interacts with ATP; it reads GISGGQDS. Asp-52 serves as a coordination point for Mg(2+). Position 140 (Arg-140) interacts with deamido-NAD(+). Thr-160 lines the ATP pocket. Glu-165 serves as a coordination point for Mg(2+). Residues Lys-173 and Asp-180 each coordinate deamido-NAD(+). Positions 189 and 211 each coordinate ATP. 260–261 contributes to the deamido-NAD(+) binding site; sequence HK.

The protein belongs to the NAD synthetase family. As to quaternary structure, homodimer.

The catalysed reaction is deamido-NAD(+) + NH4(+) + ATP = AMP + diphosphate + NAD(+) + H(+). It functions in the pathway cofactor biosynthesis; NAD(+) biosynthesis; NAD(+) from deamido-NAD(+) (ammonia route): step 1/1. Functionally, catalyzes the ATP-dependent amidation of deamido-NAD to form NAD. Uses ammonia as a nitrogen source. The chain is NH(3)-dependent NAD(+) synthetase from Salmonella dublin (strain CT_02021853).